We begin with the raw amino-acid sequence, 656 residues long: 1-deoxy-D-xylulose-5-phosphate synthase 1 (656 aa).

Residues His-73 and 113–115 contribute to the thiamine diphosphate site; that span reads SHA. Asp-144 is a binding site for Mg(2+). Thiamine diphosphate contacts are provided by residues 145–146, Asn-174, Tyr-285, and Glu-367; that span reads GA. Asn-174 provides a ligand contact to Mg(2+). A disordered region spans residues 625–656; it reads AGDRAGGPAVEQPGDGRMSGDGRIVMPAQGEN.

It belongs to the transketolase family. DXPS subfamily. Homodimer. Requires Mg(2+) as cofactor. It depends on thiamine diphosphate as a cofactor.

It catalyses the reaction D-glyceraldehyde 3-phosphate + pyruvate + H(+) = 1-deoxy-D-xylulose 5-phosphate + CO2. The protein operates within metabolic intermediate biosynthesis; 1-deoxy-D-xylulose 5-phosphate biosynthesis; 1-deoxy-D-xylulose 5-phosphate from D-glyceraldehyde 3-phosphate and pyruvate: step 1/1. Its function is as follows. Catalyzes the acyloin condensation reaction between C atoms 2 and 3 of pyruvate and glyceraldehyde 3-phosphate to yield 1-deoxy-D-xylulose-5-phosphate (DXP). The chain is 1-deoxy-D-xylulose-5-phosphate synthase 1 from Streptomyces coelicolor (strain ATCC BAA-471 / A3(2) / M145).